A 535-amino-acid chain; its full sequence is Heparanase (535 aa).

Positions M1–T27 are cleaved as a signal peptide. Residues D54–S56 and T89 contribute to the heparan sulfate group site. A propeptide spans P102 to Q149 (linker peptide). C119 and C171 are disulfide-bonded. Residue K150–N154 coordinates heparan sulfate group. N-linked (GlcNAc...) asparagine glycosylation is found at N192 and N209. E217 acts as the Proton donor in catalysis. Residues Q262–R272, H288, and R295 contribute to the heparan sulfate group site. The interval E280 to R409 is required for heterodimerization with the heparanase 8 kDa subunit. Catalysis depends on E335, which acts as the Nucleophile. Heparan sulfate group contacts are provided by residues Y340 to G342 and G381 to Y383. C429 and C534 are disulfide-bonded. N451 is a glycosylation site (N-linked (GlcNAc...) asparagine). The segment at F519–I535 is required for transferring proheparanase to the Golgi apparatus, secretion and subsequent enzyme activity and for enhancement of PKB/AKT1 phosphorylation.

Belongs to the glycosyl hydrolase 79 family. Heterodimer; heterodimer formation between the 8 kDa and the 50 kDa subunits is required for enzyme activity. Interacts with TF; the interaction, inhibited by heparin, enhances the generation of activated factor X and activates coagulation. Interacts with HRG; the interaction is enhanced at acidic pH, partially inhibits binding of HPSE to cell surface receptors and modulates its enzymatic activity. Interacts with SDC1; the interaction enhances the shedding of SDC1. Interacts with HPSE2. In terms of processing, proteolytically processed. The cleavage of the 65 kDa form leads to the generation of a linker peptide, and the 8 kDa and 50 kDa products. The active form, the 8/50 kDa heterodimer, is resistant to degradation. Complete removal of the linker peptide appears to be a prerequisite to the complete activation of the enzyme. N-glycosylated. Glycosylation of the 50 kDa subunit appears to be essential for its solubility. In terms of tissue distribution, expressed in skin, mainly in the stratum granulosum and the first layer of the stratum corneum in the upper part of the epidermis. Also detected in hair follicles and in sebaceous glands.

The protein resides in the lysosome membrane. It localises to the secreted. It is found in the nucleus. It carries out the reaction endohydrolysis of (1-&gt;4)-beta-D-glycosidic bonds of heparan sulfate chains in heparan sulfate proteoglycan.. Inhibited by EDTA and activated by calcium and magnesium. Inhibited by laminarin sulfate and, to a lower extent, by heparin and sulfamin. Functionally, endoglycosidase that cleaves heparan sulfate proteoglycans (HSPGs) into heparan sulfate side chains and core proteoglycans. Participates in extracellular matrix (ECM) degradation and remodeling. Selectively cleaves the linkage between a glucuronic acid unit and an N-sulfo glucosamine unit carrying either a 3-O-sulfo or a 6-O-sulfo group. Can also cleave the linkage between a glucuronic acid unit and an N-sulfo glucosamine unit carrying a 2-O-sulfo group, but not linkages between a glucuronic acid unit and a 2-O-sulfated iduronic acid moiety. It is essentially inactive at neutral pH but becomes active under acidic conditions such as during tumor invasion and in inflammatory processes. Facilitates cell migration associated with metastasis, wound healing and inflammation. Enhances shedding of syndecans, and increases endothelial invasion and angiogenesis in myelomas. Acts as a procoagulant by increasing the generation of activation factor X in the presence of tissue factor and activation factor VII. Increases cell adhesion to the extracellular matrix (ECM), independent of its enzymatic activity. Induces AKT1/PKB phosphorylation via lipid rafts increasing cell mobility and invasion. Heparin increases this AKT1/PKB activation. Regulates osteogenesis. Enhances angiogenesis through up-regulation of SRC-mediated activation of VEGF. Implicated in hair follicle inner root sheath differentiation and hair homeostasis. The chain is Heparanase (Hpse) from Mus musculus (Mouse).